The sequence spans 493 residues: Glutamyl-tRNA(Gln) amidotransferase subunit A (493 aa).

Active-site charge relay system residues include Lys-79 and Ser-159. Ser-183 acts as the Acyl-ester intermediate in catalysis.

This sequence belongs to the amidase family. GatA subfamily. As to quaternary structure, heterotrimer of A, B and C subunits.

It catalyses the reaction L-glutamyl-tRNA(Gln) + L-glutamine + ATP + H2O = L-glutaminyl-tRNA(Gln) + L-glutamate + ADP + phosphate + H(+). Functionally, allows the formation of correctly charged Gln-tRNA(Gln) through the transamidation of misacylated Glu-tRNA(Gln) in organisms which lack glutaminyl-tRNA synthetase. The reaction takes place in the presence of glutamine and ATP through an activated gamma-phospho-Glu-tRNA(Gln). The polypeptide is Glutamyl-tRNA(Gln) amidotransferase subunit A (Agrobacterium fabrum (strain C58 / ATCC 33970) (Agrobacterium tumefaciens (strain C58))).